Consider the following 171-residue polypeptide: Endoribonuclease ToxN (171 aa).

Belongs to the ToxN/AbiQ toxin family. As to quaternary structure, one ToxN monomer binds to a 36-nt-long single repeat of the ToxI RNA; this complex forms a triangular heterohexameric complex with ToxN connected by the ToxI RNA to another toxin molecule. The ToxI repeat forms a pseudoknot which occludes the toxin active site. Interaction of ToxI with ToxN partially inhibits the latter's endoribonuclease activity in vitro. The complex self-assembles in vitro with either full-length or processed single repeats; during the process the precursor is processed.

Toxic component of a type III toxin-antitoxin (TA) system. An endoribonuclease which is active independently of the ribosome, cleaving between the second and third A of AAA(U/G) sequences, although not all occurrences of this tetranucleotide are cleaved. Digests many mRNA species, including its own transcript and its cognate antitoxin RNA ToxI. ToxI has 5.5 nearly identical 36 nucleotide-long repeats (a single repeat neutralizes the toxin in vivo); a single repeat folds into a pseudoknot which binds the toxin. The ToxI precursor RNA is a preferential target in vivo and is progressively degraded to single repeat lengths as ToxN-ToxI complex self-assembly occurs. In vivo expression of ToxI antitoxin inhibits endonuclease activity of ToxN. The toxin alone inhibits growth when expressed in E.coli without causing cell lysis; this bacteriostatic effect is neutralized by cognate RNA antitoxin ToxI. Non-cognate antitoxin RNA from B.thuringiensis does not inhibit this toxin. The RNA antitoxin is less stable than the proteinaceous toxin; synthesis of ToxI in the absence of new ToxN synthesis restores growth and also detectable accumulation of the ToxN protein. Negatively regulates its own operon in complex with ToxI. The toxin-antitoxin system functions in plasmid maintenance (a plasmid addiction system). Functionally, the TA system protects P.atrosepticum strain 1043 against phage phiM1 and phiA2, E.coli against some but not all coliphages and S.marcescens against some bacteriophages, causing an abortive infection (Abi phenotype). Also protects P.atrosepticum strain 1043 against phage phiTE; phage that escape Abi and grow in this bacterium have evolved a pseudo-ToxI RNA by expanding a pre-existing sequence similar to the bona fide ToxI repeats. The polypeptide is Endoribonuclease ToxN (Pectobacterium atrosepticum (Erwinia carotovora subsp. atroseptica)).